The chain runs to 36 residues: Photosystem II reaction center protein Y (36 aa).

Over 1-4 the chain is Lumenal; sequence MDTR. The chain crosses the membrane as a helical span at residues 5-23; the sequence is LIVIAAPVLVAASWALFNI. The Stromal segment spans residues 24–36; sequence GRLAIQQIQRLKR.

The protein belongs to the PsbY family. In terms of assembly, PSII is composed of 1 copy each of membrane proteins PsbA, PsbB, PsbC, PsbD, PsbE, PsbF, PsbH, PsbI, PsbJ, PsbK, PsbL, PsbM, PsbT, PsbX, PsbY, PsbZ, Psb30/Ycf12, at least 3 peripheral proteins of the oxygen-evolving complex and a large number of cofactors. It forms dimeric complexes.

The protein localises to the plastid. Its subcellular location is the chloroplast thylakoid membrane. Functionally, loosely associated component of the core of photosystem II (PSII), it is not always seen in crystals. PSII is a light-driven water plastoquinone oxidoreductase, using light energy to abstract electrons from H(2)O, generating a proton gradient subsequently used for ATP formation. The protein is Photosystem II reaction center protein Y of Phaeodactylum tricornutum (strain CCAP 1055/1).